Here is a 126-residue protein sequence, read N- to C-terminus: MSWQDYVDNQLLASQCVTKACIAGHDGNIWAQSSGFEVTKEELSKLISGFDQQDGLTSNGVTLAGQRYIYLSGTDRVVRAKLGRSGVHCMKTTQAVIVSIYEDPVQPQQAASVVEKLGDYLITCGY.

This sequence belongs to the profilin family. As to quaternary structure, occurs in many kinds of cells as a complex with monomeric actin in a 1:1 ratio. Expressed in ovary and head.

It localises to the cytoplasm. The protein localises to the cytoskeleton. Functionally, binds to actin and affects the structure of the cytoskeleton. At high concentrations, profilin prevents the polymerization of actin, whereas it enhances it at low concentrations. By binding to PIP2, it may inhibit the formation of IP3 and DG. This profilin is required for intercellular cytoplasm transport during Drosophila oogenesis. Function in neurons is essential for adult survival, and is important for climbing behavior and activity. The protein is Profilin (chic) of Drosophila melanogaster (Fruit fly).